The sequence spans 281 residues: Ribosomal RNA small subunit methyltransferase I (281 aa).

This sequence belongs to the methyltransferase superfamily. RsmI family.

The protein resides in the cytoplasm. The catalysed reaction is cytidine(1402) in 16S rRNA + S-adenosyl-L-methionine = 2'-O-methylcytidine(1402) in 16S rRNA + S-adenosyl-L-homocysteine + H(+). Functionally, catalyzes the 2'-O-methylation of the ribose of cytidine 1402 (C1402) in 16S rRNA. The polypeptide is Ribosomal RNA small subunit methyltransferase I (Erythrobacter litoralis (strain HTCC2594)).